Reading from the N-terminus, the 542-residue chain is Cytochrome P450 734A6 (542 aa).

Residues 2-22 (GWWGWAAAAAAAAAWVAVKVL) form a helical membrane-spanning segment. Cys-474 is a binding site for heme.

It belongs to the cytochrome P450 family. Requires heme as cofactor. As to expression, highly expressed in leaf sheaths. Expressed in roots, shoot apex, leaf blades, internodes and panicles.

The protein localises to the membrane. Cytochrome P450 involved in brassinosteroids (BRs) inactivation and regulation of BRs homeostasis. Is a multifunctional and multisubstrate enzyme that controls the endogenous bioactive BR content both by direct inactivation of castasterone (CS) and by decreasing the levels of BR precursors. Catalyzes the oxidation of carbon 22 hydroxylated BR intermediates to produce C26 oxidized metabolites. This Oryza sativa subsp. japonica (Rice) protein is Cytochrome P450 734A6 (CYP734A6).